A 192-amino-acid polypeptide reads, in one-letter code: Natural cytotoxicity triggering receptor 3 (192 aa).

Positions 1–18 (MAKVLLIVFIMVYAGSCA) are cleaved as a signal peptide. An Ig-like domain is found at 19–126 (IWVSQPPEIR…VGTGNGTRLV (108 aa)). The Extracellular segment spans residues 19-147 (IWVSQPPEIR…AEPERAAYTS (129 aa)). Cys-39 and Cys-108 are oxidised to a cystine. 2 N-linked (GlcNAc...) asparagine glycosylation sites follow: Asn-42 and Asn-121. A helical transmembrane segment spans residues 148 to 168 (LLLRAGVYALSFLSVATGSVI). Residues 169 to 192 (YYQGKCLCHVGNTATPPTASEERF) are Cytoplasmic-facing.

This sequence belongs to the natural cytotoxicity receptor (NCR) family. Homodimer in the unliganted form. Interacts with CD3Z. Interacts with and is activated by binding to NCR3LG1. Interacts with and is activated by binding to BAG6. Interacts with and is inhibited by binding to LGALS3.

It is found in the cell membrane. Its function is as follows. Cell membrane receptor of natural killer/NK cells that is activated by binding of extracellular ligands including BAG6 and NCR3LG1. Stimulates NK cells cytotoxicity toward neighboring cells producing these ligands. It controls, for instance, NK cells cytotoxicity against tumor cells. Engagement of NCR3 by BAG6 also promotes myeloid dendritic cells (DC) maturation, both through killing DCs that did not acquire a mature phenotype, and inducing the release by NK cells of TNFA and IFNG that promote DC maturation. The chain is Natural cytotoxicity triggering receptor 3 (Ncr3) from Rattus norvegicus (Rat).